Reading from the N-terminus, the 290-residue chain is Signal recognition particle receptor FtsY (290 aa).

Residues 91 to 98 (GTNGSGKT), 173 to 177 (DTSGR), and 237 to 240 (TKVD) each bind GTP.

Belongs to the GTP-binding SRP family. FtsY subfamily. As to quaternary structure, part of the signal recognition particle protein translocation system, which is composed of SRP and FtsY.

It is found in the cell inner membrane. Its subcellular location is the cytoplasm. The catalysed reaction is GTP + H2O = GDP + phosphate + H(+). In terms of biological role, involved in targeting and insertion of nascent membrane proteins into the cytoplasmic membrane. Acts as a receptor for the complex formed by the signal recognition particle (SRP) and the ribosome-nascent chain (RNC). This is Signal recognition particle receptor FtsY from Chlamydia pneumoniae (Chlamydophila pneumoniae).